Reading from the N-terminus, the 476-residue chain is uncharacterized protein (476 aa).

The protein belongs to the herpesviridae US22 family.

This is an uncharacterized protein from Homo sapiens (Human).